A 278-amino-acid polypeptide reads, in one-letter code: tRNA uridine(34) hydroxylase (278 aa).

Positions 122-216 (QDPDVVVIDT…YLETIAPEES (95 aa)) constitute a Rhodanese domain. Cysteine 176 (cysteine persulfide intermediate) is an active-site residue.

This sequence belongs to the TrhO family.

The catalysed reaction is uridine(34) in tRNA + AH2 + O2 = 5-hydroxyuridine(34) in tRNA + A + H2O. Catalyzes oxygen-dependent 5-hydroxyuridine (ho5U) modification at position 34 in tRNAs. The protein is tRNA uridine(34) hydroxylase of Synechocystis sp. (strain ATCC 27184 / PCC 6803 / Kazusa).